An 874-amino-acid chain; its full sequence is Putative disease resistance protein At5g05400 (874 aa).

The stretch at L22–W74 forms a coiled coil. Residues A139–G434 form the NB-ARC domain. Residue G182 to T189 coordinates ATP. 7 LRR repeats span residues Q483–K505, A506–P527, K528–S548, I552–Y574, S575–R597, N598–P620, and N621–I642.

Belongs to the disease resistance NB-LRR family.

In terms of biological role, potential disease resistance protein. This Arabidopsis thaliana (Mouse-ear cress) protein is Putative disease resistance protein At5g05400.